The chain runs to 346 residues: MSEPARLISPEKRGEDLDITLRPQSLDEFTGQAEARANLKVFIEAAKNRGEALDHVLFVGPPGLGKTTLAQIMAKELGVNFRSTSGPVIAKAGDLAALLTNLEERDVLFIDEIHRLNPAVEEILYPAMEDFQLDLIIGEGPAARSVKIDLSKFTLVAATTRLGLLTTPLRDRFGIPVRLSFYTVEELELIVRRGARLMNLPITEEGAREIARRARGTPRIAGRLLRRVRDFAEVARAEAVTREIADEALTRLLVDNVGFDQLDKRYLNMIAVNFGGGPVGIETIAAGLSEPRDAIEDIIEPYMIQQGFIQRTPRGRVLTAIAWKHLGMQPPKEMEAAQFRLFQEDN.

The interval 1-182 (MSEPARLISP…FGIPVRLSFY (182 aa)) is large ATPase domain (RuvB-L). Residues L21, R22, G63, K66, T67, T68, 129–131 (EDF), R172, Y182, and R219 each bind ATP. T67 is a Mg(2+) binding site. Positions 183–253 (TVEELELIVR…IADEALTRLL (71 aa)) are small ATPAse domain (RuvB-S). The head domain (RuvB-H) stretch occupies residues 256-346 (NVGFDQLDKR…AQFRLFQEDN (91 aa)). Residues R292, R311, and R316 each coordinate DNA.

It belongs to the RuvB family. In terms of assembly, homohexamer. Forms an RuvA(8)-RuvB(12)-Holliday junction (HJ) complex. HJ DNA is sandwiched between 2 RuvA tetramers; dsDNA enters through RuvA and exits via RuvB. An RuvB hexamer assembles on each DNA strand where it exits the tetramer. Each RuvB hexamer is contacted by two RuvA subunits (via domain III) on 2 adjacent RuvB subunits; this complex drives branch migration. In the full resolvosome a probable DNA-RuvA(4)-RuvB(12)-RuvC(2) complex forms which resolves the HJ.

Its subcellular location is the cytoplasm. It carries out the reaction ATP + H2O = ADP + phosphate + H(+). The RuvA-RuvB-RuvC complex processes Holliday junction (HJ) DNA during genetic recombination and DNA repair, while the RuvA-RuvB complex plays an important role in the rescue of blocked DNA replication forks via replication fork reversal (RFR). RuvA specifically binds to HJ cruciform DNA, conferring on it an open structure. The RuvB hexamer acts as an ATP-dependent pump, pulling dsDNA into and through the RuvAB complex. RuvB forms 2 homohexamers on either side of HJ DNA bound by 1 or 2 RuvA tetramers; 4 subunits per hexamer contact DNA at a time. Coordinated motions by a converter formed by DNA-disengaged RuvB subunits stimulates ATP hydrolysis and nucleotide exchange. Immobilization of the converter enables RuvB to convert the ATP-contained energy into a lever motion, pulling 2 nucleotides of DNA out of the RuvA tetramer per ATP hydrolyzed, thus driving DNA branch migration. The RuvB motors rotate together with the DNA substrate, which together with the progressing nucleotide cycle form the mechanistic basis for DNA recombination by continuous HJ branch migration. Branch migration allows RuvC to scan DNA until it finds its consensus sequence, where it cleaves and resolves cruciform DNA. The polypeptide is Holliday junction branch migration complex subunit RuvB (Rhizobium leguminosarum bv. trifolii (strain WSM2304)).